A 187-amino-acid polypeptide reads, in one-letter code: Phosphatidylethanolamine-binding protein 1 (187 aa).

Phosphoserine occurs at positions 6 and 13. The residue at position 42 (threonine 42) is a Phosphothreonine. Serine 52, serine 54, serine 98, and serine 153 each carry phosphoserine. The interval 93–134 (KGNDISSGTVLSDYVGSGPPKGTGLHRYVWLVYEQDRPLKCD) is interaction with RAF1.

The protein belongs to the phosphatidylethanolamine-binding protein family. As to quaternary structure, has a tendency to form dimers by disulfide cross-linking. Interacts with RAF1 and this interaction is enhanced if RAF1 is phosphorylated on residues 'Ser-338', 'Ser-339', 'Tyr-340' and 'Tyr-341'. Interacts with ALOX15; in response to IL13/interleukin-13, prevents the interaction of PEBP1 with RAF1 to activate the ERK signaling cascade.

Its subcellular location is the cytoplasm. In terms of biological role, binds ATP, opioids and phosphatidylethanolamine. Has lower affinity for phosphatidylinositol and phosphatidylcholine. Serine protease inhibitor which inhibits thrombin, neuropsin and chymotrypsin but not trypsin, tissue type plasminogen activator and elastase. Inhibits the kinase activity of RAF1 by inhibiting its activation and by dissociating the RAF1/MEK complex and acting as a competitive inhibitor of MEK phosphorylation. Its function is as follows. HCNP may be involved in the function of the presynaptic cholinergic neurons of the central nervous system. HCNP increases the production of choline acetyltransferase but not acetylcholinesterase. Seems to be mediated by a specific receptor. This is Phosphatidylethanolamine-binding protein 1 (PEBP1) from Pongo abelii (Sumatran orangutan).